The sequence spans 64 residues: Large ribosomal subunit protein bL35 (64 aa).

This sequence belongs to the bacterial ribosomal protein bL35 family.

In Vibrio vulnificus (strain CMCP6), this protein is Large ribosomal subunit protein bL35.